Here is a 279-residue protein sequence, read N- to C-terminus: tRNA-cytidine(32) 2-sulfurtransferase (279 aa).

Residues serine 46 to serine 51 carry the PP-loop motif motif. Residues cysteine 121, cysteine 124, and cysteine 212 each coordinate [4Fe-4S] cluster.

The protein belongs to the TtcA family. As to quaternary structure, homodimer. It depends on Mg(2+) as a cofactor. The cofactor is [4Fe-4S] cluster.

It localises to the cytoplasm. It carries out the reaction cytidine(32) in tRNA + S-sulfanyl-L-cysteinyl-[cysteine desulfurase] + AH2 + ATP = 2-thiocytidine(32) in tRNA + L-cysteinyl-[cysteine desulfurase] + A + AMP + diphosphate + H(+). It functions in the pathway tRNA modification. In terms of biological role, catalyzes the ATP-dependent 2-thiolation of cytidine in position 32 of tRNA, to form 2-thiocytidine (s(2)C32). The sulfur atoms are provided by the cysteine/cysteine desulfurase (IscS) system. This chain is tRNA-cytidine(32) 2-sulfurtransferase, found in Marinomonas sp. (strain MWYL1).